Reading from the N-terminus, the 366-residue chain is Autophagy-related protein 18b (366 aa).

WD repeat units follow at residues 6–44, 178–218, and 223–265; these read SLPS…LCYE, AHRS…KSYS, and TYPS…NQRS.

The protein belongs to the WD repeat PROPPIN family. In terms of assembly, component of the PI(3,5)P2 regulatory complex at least composed of ATG18, SAC/FIG4, FAB1 and VAC14. In terms of tissue distribution, expressed in roots, stems, flowers and leaves.

The protein localises to the preautophagosomal structure membrane. It is found in the vacuole membrane. Its function is as follows. The PI(3,5)P2 regulatory complex regulates both the synthesis and turnover of phosphatidylinositol 3,5-bisphosphate (PtdIns(3,5)P2). Required for autophagy. This Arabidopsis thaliana (Mouse-ear cress) protein is Autophagy-related protein 18b (ATG18B).